The chain runs to 49 residues: Beta-toxin Rc1 (49 aa).

3 disulfide bridges follow: Cys-15–Cys-31, Cys-22–Cys-40, and Cys-26–Cys-42.

Belongs to the long (4 C-C) scorpion toxin superfamily. Sodium channel inhibitor family. Beta subfamily. In terms of tissue distribution, expressed by the venom gland.

It is found in the secreted. In terms of biological role, beta toxins bind voltage-independently at site-4 of sodium channels (Nav) and shift the voltage of activation toward more negative potentials thereby affecting sodium channel activation and promoting spontaneous and repetitive firing. This toxin acts on X.laevis Nav1.6/SCN8A and insect BgNav1 channels, and also displays a small but significant effect on X.laevis Nav1.4/SCN4A channels. In mice induces nociception (licking and lifting behaviors) during the first 15 minutes after injection, and increases the release of TNF-alpha in J774.1 cells. The sequence is that of Beta-toxin Rc1 from Rhopalurus crassicauda (Scorpion).